The sequence spans 1201 residues: MEIPIQVAVRIFPHRELKDLLRSFGPTEPKKDAQAVDEGADSKDSEAQVPAAEKDNPSISETDPNGNAEQDSAADSKTIPDANGNDSGQKDYPDSAYCVQAIPISASALGLPSALPGGDPMDSIAAGLIQVGPHTVPVTHALPSSSSQEQVYHQTVFPLITLFLEGFDASVVTYGQRGQGKSYTLYGNVQDPTLTDSTEGVVQLCVRDIFSHISLHPERTYAINVGFVEICGGDVCDLLGMGNIHCTNVDAVFHWLQVGLSARQSLPAHTLFTLTLEQQWVSKEGLLQHRLSTASFSDLCGTERCGDQPPGRPLDAGLCMLEQVISTLTDPGLMYGVNGNIPYGQTTLTTLLKDSFGGRAQTLVILCVSPLEEHLPETLGNLQFAFKVQCVRNFVIMNTYSDDNTMIVQPAEPVPESNSSAGPLSQAGPGDNFGLQFAASQWSKLVTNAEGLFSKLIDSKLITEVEKEQIEEWLFLKQECEECLSSTEAMRQQKQLVPILEAEEPEDVNSEAANSESPNSDNENDTDNESHRPDLDDKIESLMEEFRDKTDALILEKHAEYLSKHPKAVMQSQDREIEAQPPEENGDDRKVSIGSRRRSVQPGASLSTAELAMLNRVASQQPPPPIDPESVVDPLESSSGEGIRQAALAAAAATAPIEQLQKKLRKLVAEIEGKQRQLREIEETIQVKQNIIAELVKNSDTRSHAKQRFHKKRAKLEAECDKAKKQLGKALVQGRDQSEIERWTTIIGHLERRLEDLSSMKHIAGESGQKVKKLQQSVGESRKQADDLQKKLRKECKLRCQMEAELAKLRESRETGKELVKAQGSPEQQGRQLKAVQARITHLNHILREKSDNLEEQPGPEQQETLRHEIRNLRGTRDLLLEERCHLDRKLKRDKVLTQKEERKLLECDEAIEAIDAAIEFKNEMITGHRSIDTSDRIQREKGEQMLMARLNRLSTEEMRTLLYKYFTKVIDLRDSSRKLELQLVQLERERDAWEWKERVLSNAVRQARLEGERNAVLLQRQHEMKLTLMLRHMAEETSASSASYGERALAPACVAPPVQASSDFDYDHFYKGGGNPSKALIKAPKPMPTGSALDKYKDKEQRSGRNIFAKFHVLTRYASAAAAGSSGSTAEESTALIESTTTATATTTSTTTTGAVGKVKDKALVSFRPEQLKRLMPAPTATKVTRQKNKIIIQDASRRN.

Positions 4 to 391 (PIQVAVRIFP…LQFAFKVQCV (388 aa)) constitute a Kinesin motor domain. The segment at 23 to 92 (SFGPTEPKKD…NGNDSGQKDY (70 aa)) is disordered. A compositionally biased stretch (basic and acidic residues) spans 28–56 (EPKKDAQAVDEGADSKDSEAQVPAAEKDN). Over residues 57 to 75 (PSISETDPNGNAEQDSAAD) the composition is skewed to polar residues. 175-182 (GQRGQGKS) lines the ATP pocket. Disordered stretches follow at residues 502-536 (AEEP…PDLD), 565-606 (HPKA…GASL), and 618-639 (ASQQ…ESSS). Residues 510–521 (SEAANSESPNSD) show a composition bias toward low complexity. Residues Ser599 and Ser605 each carry the phosphoserine modification. Coiled coils occupy residues 652–821 (AATA…ELVK) and 968–1001 (TKVI…ERVL).

This sequence belongs to the TRAFAC class myosin-kinesin ATPase superfamily. Kinesin family. KIF27 subfamily. In terms of assembly, homodimer (Potential). Binds microtubules. Interacts with ci, smo, sgg, CkIalpha and protein kinase A catalytic subunit. Interacts (via kinesin motor domain) with Ubr3. Polyubiquitinated by Ubr3, which leads to proteasomal degradation.

The protein resides in the cytoplasm. Its subcellular location is the cytoskeleton. Regulates cubitus interruptus (ci) processing by recruiting multiple kinases to promote its efficient phosphorylation. Scaffolds multiple kinases and ci into proximity to promote its hyperphosphorylation, which then targets it for SCFSlimb/proteasome-mediated processing to generate its repressor form. Hh signaling inhibits ci phosphorylation by interfering with the cos-ci-kinases complex formation. Negatively regulates hh-signaling pathways during various processes, including photoreceptor differentiation. May negatively regulate a hh-signaling pathway which functions in the intestinal immune response to bacterial uracil by activating the Duox-dependent production of reactive oxygen species (ROS). The sequence is that of Kinesin-like protein costa (cos) from Drosophila melanogaster (Fruit fly).